Consider the following 419-residue polypeptide: Putative zinc metalloprotease M6_Spy1682 (419 aa).

Position 18 (H18) interacts with Zn(2+). E19 is a catalytic residue. A Zn(2+)-binding site is contributed by H22. 4 helical membrane passes run 169 to 191, 301 to 323, 343 to 365, and 392 to 411; these read LITN…ILLV, LAWS…FSLN, LESV…LIPI, and AYIT…AVTW. The 100-residue stretch at 175-274 folds into the PDZ domain; the sequence is GPMNNFILGI…LKTVAVKPQK (100 aa).

It belongs to the peptidase M50B family. Zn(2+) serves as cofactor.

Its subcellular location is the cell membrane. In Streptococcus pyogenes serotype M6 (strain ATCC BAA-946 / MGAS10394), this protein is Putative zinc metalloprotease M6_Spy1682.